Consider the following 356-residue polypeptide: Holliday junction branch migration complex subunit RuvB (356 aa).

Residues 4 to 192 are large ATPase domain (RuvB-L); the sequence is DDTTDATADE…FGFTAHMEFY (189 aa). ATP-binding positions include L31, R32, G73, K76, T77, T78, 139–141, R182, Y192, and R229; that span reads EDF. Position 77 (T77) interacts with Mg(2+). The small ATPAse domain (RuvB-S) stretch occupies residues 193–263; that stretch reads EPHELERVIH…IAAAALKVYE (71 aa). The tract at residues 266–356 is head domain (RuvB-H); sequence ARGLDRLDRG…GNGQGDLFGA (91 aa). The DNA site is built by R302, R321, and R326.

The protein belongs to the RuvB family. Homohexamer. Forms an RuvA(8)-RuvB(12)-Holliday junction (HJ) complex. HJ DNA is sandwiched between 2 RuvA tetramers; dsDNA enters through RuvA and exits via RuvB. An RuvB hexamer assembles on each DNA strand where it exits the tetramer. Each RuvB hexamer is contacted by two RuvA subunits (via domain III) on 2 adjacent RuvB subunits; this complex drives branch migration. In the full resolvosome a probable DNA-RuvA(4)-RuvB(12)-RuvC(2) complex forms which resolves the HJ.

The protein resides in the cytoplasm. The enzyme catalyses ATP + H2O = ADP + phosphate + H(+). Functionally, the RuvA-RuvB-RuvC complex processes Holliday junction (HJ) DNA during genetic recombination and DNA repair, while the RuvA-RuvB complex plays an important role in the rescue of blocked DNA replication forks via replication fork reversal (RFR). RuvA specifically binds to HJ cruciform DNA, conferring on it an open structure. The RuvB hexamer acts as an ATP-dependent pump, pulling dsDNA into and through the RuvAB complex. RuvB forms 2 homohexamers on either side of HJ DNA bound by 1 or 2 RuvA tetramers; 4 subunits per hexamer contact DNA at a time. Coordinated motions by a converter formed by DNA-disengaged RuvB subunits stimulates ATP hydrolysis and nucleotide exchange. Immobilization of the converter enables RuvB to convert the ATP-contained energy into a lever motion, pulling 2 nucleotides of DNA out of the RuvA tetramer per ATP hydrolyzed, thus driving DNA branch migration. The RuvB motors rotate together with the DNA substrate, which together with the progressing nucleotide cycle form the mechanistic basis for DNA recombination by continuous HJ branch migration. Branch migration allows RuvC to scan DNA until it finds its consensus sequence, where it cleaves and resolves cruciform DNA. The polypeptide is Holliday junction branch migration complex subunit RuvB (Streptomyces avermitilis (strain ATCC 31267 / DSM 46492 / JCM 5070 / NBRC 14893 / NCIMB 12804 / NRRL 8165 / MA-4680)).